Reading from the N-terminus, the 508-residue chain is E3 ubiquitin-protein ligase XBAT32 (508 aa).

5 ANK repeats span residues 50 to 79 (VRNSPLHYSAAQGHHEIVSLLVESGVDINL), 83 to 112 (RGQTALMQACQHGHWEVVLILILFGANIHR), 117 to 147 (NGGTALHLAALNGHPRCIRILLSEYIPSVPN), 177 to 206 (GGITPLHVAALNGHIETVQLLLDLGASVTQ), and 220 to 249 (AGSTALHYASCGGNTQCCQLLISKGACLAA). Residues 321 to 372 (CAVCLERKCTVAADGCAHEFCTNCALYLSTTSITSSKTSNVTPGSVPCPLCR) form an RING-type zinc finger.

In terms of assembly, interacts with ACS4 and ACS7. In terms of tissue distribution, expressed in the vascular system of primary root, vascular tissue of leaves, stems and anthers.

The enzyme catalyses S-ubiquitinyl-[E2 ubiquitin-conjugating enzyme]-L-cysteine + [acceptor protein]-L-lysine = [E2 ubiquitin-conjugating enzyme]-L-cysteine + N(6)-ubiquitinyl-[acceptor protein]-L-lysine.. It participates in protein modification; protein ubiquitination. E3 ubiquitin-protein ligase that mediates ubiquitination of ACC synthases (ACS). Negatively regulates ethylene biosynthesis probably via ubiquitin-dependent degradation of ACS4 and ACS7 enzymes. Regulates lateral root formation and development by controlling ethylene production which inhibits lateral root formation at high concentration. In Arabidopsis thaliana (Mouse-ear cress), this protein is E3 ubiquitin-protein ligase XBAT32 (XBAT32).